Consider the following 461-residue polypeptide: Cysteine--tRNA ligase (461 aa).

Residue Cys-30 coordinates Zn(2+). A 'HIGH' region motif is present at residues 32–42 (VTVYDLCHIGH). Cys-211, His-236, and Glu-240 together coordinate Zn(2+). Positions 268 to 272 (KMSKS) match the 'KMSKS' region motif. Lys-271 is an ATP binding site.

It belongs to the class-I aminoacyl-tRNA synthetase family. In terms of assembly, monomer. Zn(2+) serves as cofactor.

The protein resides in the cytoplasm. It carries out the reaction tRNA(Cys) + L-cysteine + ATP = L-cysteinyl-tRNA(Cys) + AMP + diphosphate. The polypeptide is Cysteine--tRNA ligase (Shewanella sp. (strain ANA-3)).